We begin with the raw amino-acid sequence, 278 residues long: Bis(5'-nucleosyl)-tetraphosphatase, symmetrical (278 aa).

It belongs to the Ap4A hydrolase family.

It carries out the reaction P(1),P(4)-bis(5'-adenosyl) tetraphosphate + H2O = 2 ADP + 2 H(+). Hydrolyzes diadenosine 5',5'''-P1,P4-tetraphosphate to yield ADP. This chain is Bis(5'-nucleosyl)-tetraphosphatase, symmetrical, found in Nitrosococcus oceani (strain ATCC 19707 / BCRC 17464 / JCM 30415 / NCIMB 11848 / C-107).